A 275-amino-acid polypeptide reads, in one-letter code: MAVKTYKPYTPSRRFMSNLSSSDITGKASVKSLLIKLPVSAGRNNNGRITSRHKEGGAKKFYRIIDFKRNKFNIQGKVAAIEYDPYRNCRIALIHYVDGEKRYIIQPSGLKVGDVVFSASSGLDIKTGFAMKLKSMPIGTIVHNIEMHPGAGGALARSAGTSAQIMGREGKYIILRMPSGEMRYILEECMATIGVVGNEDFANISIGKAGRNRHRGIRPQTRGSAMNPVDHPHGGGEGKTGSSGHPVSPWGTPAKGFKTRKKKASDKLIISRKKK.

The disordered stretch occupies residues 210–275; sequence GRNRHRGIRP…DKLIISRKKK (66 aa). Over residues 257-275 the composition is skewed to basic residues; the sequence is FKTRKKKASDKLIISRKKK.

It belongs to the universal ribosomal protein uL2 family. Part of the 50S ribosomal subunit. Forms a bridge to the 30S subunit in the 70S ribosome.

Its function is as follows. One of the primary rRNA binding proteins. Required for association of the 30S and 50S subunits to form the 70S ribosome, for tRNA binding and peptide bond formation. It has been suggested to have peptidyltransferase activity; this is somewhat controversial. Makes several contacts with the 16S rRNA in the 70S ribosome. This Helicobacter hepaticus (strain ATCC 51449 / 3B1) protein is Large ribosomal subunit protein uL2.